We begin with the raw amino-acid sequence, 501 residues long: Uridine kinase (501 aa).

Residue S17 is modified to Phosphoserine. 63-70 (GASGSGKT) serves as a coordination point for ATP. Phosphoserine is present on S276.

The protein belongs to the uridine kinase family.

The protein localises to the cytoplasm. The protein resides in the nucleus. The catalysed reaction is uridine + ATP = UMP + ADP + H(+). The enzyme catalyses cytidine + ATP = CMP + ADP + H(+). It functions in the pathway pyrimidine metabolism; CTP biosynthesis via salvage pathway; CTP from cytidine: step 1/3. It participates in pyrimidine metabolism; UMP biosynthesis via salvage pathway; UMP from uridine: step 1/1. Catalyzes the conversion of uridine into UMP and cytidine into CMP in the pyrimidine salvage pathway. This Saccharomyces cerevisiae (strain ATCC 204508 / S288c) (Baker's yeast) protein is Uridine kinase (URK1).